Consider the following 782-residue polypeptide: Coiled-coil alpha-helical rod protein 1 (782 aa).

Basic and acidic residues-rich tracts occupy residues 62-74 (ERDVSSDRQEPGR) and 208-218 (ETRRAGEAKEL). Disordered stretches follow at residues 62-82 (ERDVSSDRQEPGRRGRSWGLE) and 177-218 (EQLS…AKEL). Coiled-coil stretches lie at residues 111–303 (LRET…SLTH), 344–437 (LMVQ…NAVS), and 498–691 (VTDV…QQEG).

As to expression, found in all tissues tested, abundantly expressed in heart, liver, skeletal muscle, kidney and pancreas, and to a lesser extent in lung and placenta. Overexpressed in keratinocytes of psoriatic lesions.

It localises to the cytoplasm. Its subcellular location is the nucleus. Functionally, may be a regulator of keratinocyte proliferation or differentiation. The chain is Coiled-coil alpha-helical rod protein 1 (CCHCR1) from Homo sapiens (Human).